The sequence spans 373 residues: UDP-N-acetylglucosamine--N-acetylmuramyl-(pentapeptide) pyrophosphoryl-undecaprenol N-acetylglucosamine transferase (373 aa).

UDP-N-acetyl-alpha-D-glucosamine is bound by residues 14–16 (TAG), N128, R165, S199, and Q295.

This sequence belongs to the glycosyltransferase 28 family. MurG subfamily.

The protein resides in the cell membrane. The enzyme catalyses di-trans,octa-cis-undecaprenyl diphospho-N-acetyl-alpha-D-muramoyl-L-alanyl-D-glutamyl-meso-2,6-diaminopimeloyl-D-alanyl-D-alanine + UDP-N-acetyl-alpha-D-glucosamine = di-trans,octa-cis-undecaprenyl diphospho-[N-acetyl-alpha-D-glucosaminyl-(1-&gt;4)]-N-acetyl-alpha-D-muramoyl-L-alanyl-D-glutamyl-meso-2,6-diaminopimeloyl-D-alanyl-D-alanine + UDP + H(+). It functions in the pathway cell wall biogenesis; peptidoglycan biosynthesis. Its function is as follows. Cell wall formation. Catalyzes the transfer of a GlcNAc subunit on undecaprenyl-pyrophosphoryl-MurNAc-pentapeptide (lipid intermediate I) to form undecaprenyl-pyrophosphoryl-MurNAc-(pentapeptide)GlcNAc (lipid intermediate II). This is UDP-N-acetylglucosamine--N-acetylmuramyl-(pentapeptide) pyrophosphoryl-undecaprenol N-acetylglucosamine transferase from Mycobacterium sp. (strain JLS).